A 481-amino-acid polypeptide reads, in one-letter code: Aspartyl/glutamyl-tRNA(Asn/Gln) amidotransferase subunit B (481 aa).

The protein belongs to the GatB/GatE family. GatB subfamily. As to quaternary structure, heterotrimer of A, B and C subunits.

The catalysed reaction is L-glutamyl-tRNA(Gln) + L-glutamine + ATP + H2O = L-glutaminyl-tRNA(Gln) + L-glutamate + ADP + phosphate + H(+). The enzyme catalyses L-aspartyl-tRNA(Asn) + L-glutamine + ATP + H2O = L-asparaginyl-tRNA(Asn) + L-glutamate + ADP + phosphate + 2 H(+). In terms of biological role, allows the formation of correctly charged Asn-tRNA(Asn) or Gln-tRNA(Gln) through the transamidation of misacylated Asp-tRNA(Asn) or Glu-tRNA(Gln) in organisms which lack either or both of asparaginyl-tRNA or glutaminyl-tRNA synthetases. The reaction takes place in the presence of glutamine and ATP through an activated phospho-Asp-tRNA(Asn) or phospho-Glu-tRNA(Gln). This Ehrlichia chaffeensis (strain ATCC CRL-10679 / Arkansas) protein is Aspartyl/glutamyl-tRNA(Asn/Gln) amidotransferase subunit B.